A 377-amino-acid chain; its full sequence is UPF0754 membrane protein lwe2241 (377 aa).

Helical transmembrane passes span 1-21 (MSVL…GAMT) and 357-377 (YLGG…AIWI).

Belongs to the UPF0754 family.

The protein resides in the cell membrane. The chain is UPF0754 membrane protein lwe2241 from Listeria welshimeri serovar 6b (strain ATCC 35897 / DSM 20650 / CCUG 15529 / CIP 8149 / NCTC 11857 / SLCC 5334 / V8).